A 964-amino-acid polypeptide reads, in one-letter code: Glycine dehydrogenase (decarboxylating) (964 aa).

A compositionally biased stretch (polar residues) spans 1 to 11; sequence MNSTLQNQTKT. Positions 1 to 21 are disordered; sequence MNSTLQNQTKTNLEKVGTDPL. Lys-713 is modified (N6-(pyridoxal phosphate)lysine).

It belongs to the GcvP family. As to quaternary structure, the glycine cleavage system is composed of four proteins: P, T, L and H. Pyridoxal 5'-phosphate serves as cofactor.

It carries out the reaction N(6)-[(R)-lipoyl]-L-lysyl-[glycine-cleavage complex H protein] + glycine + H(+) = N(6)-[(R)-S(8)-aminomethyldihydrolipoyl]-L-lysyl-[glycine-cleavage complex H protein] + CO2. The glycine cleavage system catalyzes the degradation of glycine. The P protein binds the alpha-amino group of glycine through its pyridoxal phosphate cofactor; CO(2) is released and the remaining methylamine moiety is then transferred to the lipoamide cofactor of the H protein. The sequence is that of Glycine dehydrogenase (decarboxylating) from Leptospira interrogans serogroup Icterohaemorrhagiae serovar Lai (strain 56601).